A 938-amino-acid chain; its full sequence is Bifunctional uridylyltransferase/uridylyl-removing enzyme (938 aa).

Residues 1-379 are uridylyltransferase; that stretch reads MPPRLRPTHL…PGRAQKRKPL (379 aa). The segment at 380–733 is uridylyl-removing; sequence DEPGFHEVGG…GRIRSELNAA (354 aa). An HD domain is found at 495–617; it reads VDEHTLRAVG…VQSPERLRLL (123 aa). 2 consecutive ACT domains span residues 734 to 813 and 845 to 924; these read EVVV…PVAR and VVEA…TAQA.

Belongs to the GlnD family. Requires Mg(2+) as cofactor.

It carries out the reaction [protein-PII]-L-tyrosine + UTP = [protein-PII]-uridylyl-L-tyrosine + diphosphate. The catalysed reaction is [protein-PII]-uridylyl-L-tyrosine + H2O = [protein-PII]-L-tyrosine + UMP + H(+). Uridylyltransferase (UTase) activity is inhibited by glutamine, while glutamine activates uridylyl-removing (UR) activity. In terms of biological role, modifies, by uridylylation and deuridylylation, the PII regulatory proteins (GlnB and homologs), in response to the nitrogen status of the cell that GlnD senses through the glutamine level. Under low glutamine levels, catalyzes the conversion of the PII proteins and UTP to PII-UMP and PPi, while under higher glutamine levels, GlnD hydrolyzes PII-UMP to PII and UMP (deuridylylation). Thus, controls uridylylation state and activity of the PII proteins, and plays an important role in the regulation of nitrogen assimilation and metabolism. The protein is Bifunctional uridylyltransferase/uridylyl-removing enzyme of Phenylobacterium zucineum (strain HLK1).